The primary structure comprises 339 residues: 7,8-didemethyl-8-hydroxy-5-deazariboflavin synthase (339 aa).

A Radical SAM core domain is found at 25–256; that stretch reads ATYSPAYTIV…PDITIQIPPN (232 aa). Positions 39, 43, and 46 each coordinate [4Fe-4S] cluster.

This sequence belongs to the radical SAM superfamily. CofG family. As to quaternary structure, consists of two subunits, CofG and CofH. [4Fe-4S] cluster serves as cofactor.

The enzyme catalyses 5-amino-5-(4-hydroxybenzyl)-6-(D-ribitylimino)-5,6-dihydrouracil + S-adenosyl-L-methionine = 7,8-didemethyl-8-hydroxy-5-deazariboflavin + 5'-deoxyadenosine + L-methionine + NH4(+) + H(+). Its pathway is cofactor biosynthesis; coenzyme F0 biosynthesis. In terms of biological role, catalyzes the radical-mediated synthesis of 7,8-didemethyl-8-hydroxy-5-deazariboflavin from 5-amino-5-(4-hydroxybenzyl)-6-(D-ribitylimino)-5,6-dihydrouracil. The polypeptide is 7,8-didemethyl-8-hydroxy-5-deazariboflavin synthase (Nostoc sp. (strain PCC 7120 / SAG 25.82 / UTEX 2576)).